Consider the following 320-residue polypeptide: GPI-specific phospholipase A2-like PGAP3 (320 aa).

Residues 1–23 (MAKRTAPLLLLTLAVGLAGGSQG) form the signal peptide. Over 24–98 (DREPVYRDCV…QFHGKWPFSR (75 aa)) the chain is Lumenal. Asn40 carries an N-linked (GlcNAc...) asparagine glycan. Residues 99-119 (FLFIQEPASAVASLLNGLASL) traverse the membrane as a helical segment. The Cytoplasmic segment spans residues 120-135 (VMLCRYRASVPASSPM). The chain crosses the membrane as a helical span at residues 136–156 (YHTCMAFAWVSLNAWFWSTVF). Topologically, residues 157 to 169 (HTRDTDLTEKMDY) are lumenal. Residues 170-190 (FCASAVILHSVYLCCVRTVGL) traverse the membrane as a helical segment. The Cytoplasmic portion of the chain corresponds to 191–198 (QHPSVASA). A helical transmembrane segment spans residues 199–219 (FGALLLLLLTGHISYLSLVHF). The Lumenal segment spans residues 220 to 223 (DYGY). A helical transmembrane segment spans residues 224 to 244 (NMMANVAIGLVNLAWWLVWCL). Topologically, residues 245–257 (RNRQRLPHTRRCM) are cytoplasmic. A helical transmembrane segment spans residues 258 to 278 (VVVVLLQGLSLLELLDFPPLF). Residue Trp279 is a topological domain, lumenal. The chain crosses the membrane as a helical span at residues 280–299 (VLDAHAIWHISTIPVHTLFF). The Cytoplasmic portion of the chain corresponds to 300–320 (RFLEDDSLYLLKESGAMFKLD).

It belongs to the PGAP3 family.

Its subcellular location is the golgi apparatus membrane. In terms of biological role, involved in the fatty acid remodeling steps of GPI-anchor maturation where the unsaturated acyl chain at sn-2 of inositol phosphate is replaced by a saturated stearoyl chain. May catalyze the first step of the fatty acid remodeling, by removing the unsaturated acyl chain at sn-2 of inositol phosphate, generating a lyso-GPI intermediate. The fatty acid remodeling steps is critical for the integration of GPI-APs into lipid rafts. The protein is GPI-specific phospholipase A2-like PGAP3 of Mus musculus (Mouse).